Consider the following 546-residue polypeptide: NAD(P)H-quinone oxidoreductase chain 4 (546 aa).

Transmembrane regions (helical) follow at residues V17 to I37, W48 to G68, L103 to F123, L127 to D147, L149 to W169, F181 to F201, G222 to V242, T256 to L276, F290 to F310, M327 to L347, Q348 to D368, F389 to V409, V430 to M450, and V477 to M497.

Belongs to the complex I subunit 4 family.

Its subcellular location is the cellular thylakoid membrane. It catalyses the reaction a plastoquinone + NADH + (n+1) H(+)(in) = a plastoquinol + NAD(+) + n H(+)(out). It carries out the reaction a plastoquinone + NADPH + (n+1) H(+)(in) = a plastoquinol + NADP(+) + n H(+)(out). In terms of biological role, NDH-1 shuttles electrons from NAD(P)H, via FMN and iron-sulfur (Fe-S) centers, to quinones in the respiratory chain. The immediate electron acceptor for the enzyme in this species is believed to be plastoquinone. Couples the redox reaction to proton translocation (for every two electrons transferred, four hydrogen ions are translocated across the cytoplasmic membrane), and thus conserves the redox energy in a proton gradient. In Parasynechococcus marenigrum (strain WH8102), this protein is NAD(P)H-quinone oxidoreductase chain 4.